Here is a 295-residue protein sequence, read N- to C-terminus: Proline iminopeptidase (295 aa).

The AB hydrolase-1 domain maps to 35–279 (TLHGGPGMSH…ACSHLTMWED (245 aa)). Catalysis depends on Ser107, which acts as the Nucleophile. Asp246 is an active-site residue. His273 acts as the Proton donor in catalysis.

This sequence belongs to the peptidase S33 family. As to quaternary structure, part of the tricorn proteolytic complex.

The enzyme catalyses Release of N-terminal proline from a peptide.. Cleaves H-Pro-AMC as well as a wide spectrum of amino acid substrates and several peptide substrates without a proline at the N-terminus. In conjunction with the three factors F1, F2 and F3, Tricorn degrades oligopeptides in a sequential manner, yielding free amino acids. The chain is Proline iminopeptidase (pip) from Thermoplasma volcanium (strain ATCC 51530 / DSM 4299 / JCM 9571 / NBRC 15438 / GSS1).